The primary structure comprises 306 residues: Bifunctional protein FolD (306 aa).

Residues 166 to 168 (GRS) and I232 each bind NADP(+).

It belongs to the tetrahydrofolate dehydrogenase/cyclohydrolase family. Homodimer.

The enzyme catalyses (6R)-5,10-methylene-5,6,7,8-tetrahydrofolate + NADP(+) = (6R)-5,10-methenyltetrahydrofolate + NADPH. It catalyses the reaction (6R)-5,10-methenyltetrahydrofolate + H2O = (6R)-10-formyltetrahydrofolate + H(+). It participates in one-carbon metabolism; tetrahydrofolate interconversion. Catalyzes the oxidation of 5,10-methylenetetrahydrofolate to 5,10-methenyltetrahydrofolate and then the hydrolysis of 5,10-methenyltetrahydrofolate to 10-formyltetrahydrofolate. The polypeptide is Bifunctional protein FolD (Methylorubrum extorquens (strain CM4 / NCIMB 13688) (Methylobacterium extorquens)).